The chain runs to 198 residues: MVITLPKLKYALNALSPHISEETLNFHYNKHHAGYVNKLNTLIKDTPFAEKSLLDIVKESSGAIFNNAAQIWNHTFYWDSMGPDCGGEPHGEIKEKIQEDFGSFNNFKEQFSNILCGHFGSGWGWLALNNNNKLVILQTHDAGNPIKDNTGIPILTCDIWEHAYYIDYRNDRASYVKAWWNLVNWNFANENLKKAMQK.

Fe cation contacts are provided by His27, His74, Asp158, and His162.

This sequence belongs to the iron/manganese superoxide dismutase family. Homodimer. Fe cation is required as a cofactor.

It localises to the cytoplasm. The catalysed reaction is 2 superoxide + 2 H(+) = H2O2 + O2. Functionally, destroys superoxide anion radicals which are normally produced within the cells and which are toxic to biological systems. This chain is Superoxide dismutase [Fe] (SODB), found in Plasmodium falciparum (isolate 3D7).